We begin with the raw amino-acid sequence, 232 residues long: 2-C-methyl-D-erythritol 4-phosphate cytidylyltransferase (232 aa).

This sequence belongs to the IspD/TarI cytidylyltransferase family. IspD subfamily.

It catalyses the reaction 2-C-methyl-D-erythritol 4-phosphate + CTP + H(+) = 4-CDP-2-C-methyl-D-erythritol + diphosphate. It functions in the pathway isoprenoid biosynthesis; isopentenyl diphosphate biosynthesis via DXP pathway; isopentenyl diphosphate from 1-deoxy-D-xylulose 5-phosphate: step 2/6. In terms of biological role, catalyzes the formation of 4-diphosphocytidyl-2-C-methyl-D-erythritol from CTP and 2-C-methyl-D-erythritol 4-phosphate (MEP). This chain is 2-C-methyl-D-erythritol 4-phosphate cytidylyltransferase, found in Bacillus velezensis (strain DSM 23117 / BGSC 10A6 / LMG 26770 / FZB42) (Bacillus amyloliquefaciens subsp. plantarum).